Consider the following 376-residue polypeptide: dTDP-4-amino-4,6-dideoxygalactose transaminase (376 aa).

An N6-(pyridoxal phosphate)lysine modification is found at K181.

The protein belongs to the DegT/DnrJ/EryC1 family. As to quaternary structure, homotetramer. It depends on pyridoxal 5'-phosphate as a cofactor.

The enzyme catalyses dTDP-4-amino-4,6-dideoxy-alpha-D-galactose + 2-oxoglutarate = dTDP-4-dehydro-6-deoxy-alpha-D-glucose + L-glutamate. The protein operates within bacterial outer membrane biogenesis; enterobacterial common antigen biosynthesis. Functionally, catalyzes the synthesis of dTDP-4-amino-4,6-dideoxy-D-galactose (dTDP-Fuc4N) from dTDP-4-keto-6-deoxy-D-glucose (dTDP-D-Glc4O) and L-glutamate. The chain is dTDP-4-amino-4,6-dideoxygalactose transaminase from Escherichia coli (strain K12).